The chain runs to 501 residues: ADP,ATP carrier protein 3 (501 aa).

The next 12 membrane-spanning stretches (helical) occupy residues L23–L43, I59–Y79, Y90–I110, Y146–W166, P183–F203, I227–F247, I293–A313, F326–I346, L361–I381, E383–I403, F446–T466, and I470–I490.

It belongs to the ADP/ATP translocase tlc family.

The protein resides in the cell membrane. Provides the rickettsial cell with host ATP in exchange for rickettsial ADP. This is an obligate exchange system. This energy acquiring activity is an important component of rickettsial parasitism. The sequence is that of ADP,ATP carrier protein 3 (tlcC) from Rickettsia felis (strain ATCC VR-1525 / URRWXCal2) (Rickettsia azadi).